The following is a 147-amino-acid chain: MVSEAISKKEIERVKFESKDLHKPDEYWREHLTEEAFYVCRQQGTEAPYSGKLLHNKDTGLYHCTCCQSALFSSENKYDSGCGWPSFDAPINEQVIRFLDDFSHGMVRTEIRCAACDSHLGHVFEDGPKTTGLRFCVNSVSLIFNKK.

Residues 25–147 (DEYWREHLTE…NSVSLIFNKK (123 aa)) enclose the MsrB domain. Cys64, Cys67, Cys113, and Cys116 together coordinate Zn(2+). The active-site Nucleophile is Cys136.

The protein belongs to the MsrB Met sulfoxide reductase family. It depends on Zn(2+) as a cofactor.

The catalysed reaction is L-methionyl-[protein] + [thioredoxin]-disulfide + H2O = L-methionyl-(R)-S-oxide-[protein] + [thioredoxin]-dithiol. The protein is Peptide methionine sulfoxide reductase MsrB of Vibrio cholerae serotype O1 (strain ATCC 39541 / Classical Ogawa 395 / O395).